The chain runs to 266 residues: Glutathione S-transferase AN1595 (266 aa).

One can recognise a GST N-terminal domain in the interval 43-123 (SFGKLYTYKR…HVTNEDSTTT (81 aa)). Glutathione is bound by residues K93, E107, C108, and N143. A substrate-binding site is contributed by K93. The region spanning 128 to 259 (SSLDFVQIIR…VEEGLPNAPP (132 aa)) is the GST C-terminal domain.

Belongs to the GST superfamily.

The protein operates within secondary metabolite biosynthesis; terpenoid biosynthesis. Functionally, glutathione S-transferase; part of the gene cluster that mediates the biosynthesis of the diterpene ent-pimara-8(14),15-diene (PD). Within the cluster, the HMG-CoA reductase AN1593 functions in the mevalonate pathway, which produces isoprenoid precursors. The geranylgeranyl pyrophosphate (GGPP) synthase AN1592 is needed in the formation of GGPP, the precursor for diterpenes. Lastly, the pimaradiene synthase pbcA performs the 2 cyclization steps that convert GGPP to ent-pimara-8(14),15-diene. The putative roles of the remaining cluster enzymes in ent-pimara-8(14),15-diene biosynthesis is unclear. The cytochrome P450 monooxygenase AN1598, the glutathione S-transferase AN1595, the oxidoreductases AN1596 and AN1597 probably function as decorative enzymes. It is possible that in biological conditions the compound is oxidized to ent-pimara-8(14),15-dien-19-oic acid, which is a bioactive diterpene compound predominant in many plant extracts. The protein is Glutathione S-transferase AN1595 of Emericella nidulans (strain FGSC A4 / ATCC 38163 / CBS 112.46 / NRRL 194 / M139) (Aspergillus nidulans).